Consider the following 68-residue polypeptide: U2-agatoxin-Ao1u (68 aa).

The first 20 residues, 1–20 (MKAIISLLLISAMVFSMIEA), serve as a signal peptide directing secretion. Residues 21-34 (VPLEEGLQLFEGER) constitute a propeptide that is removed on maturation. Intrachain disulfides connect cysteine 36–cysteine 52, cysteine 43–cysteine 57, and cysteine 51–cysteine 67.

This sequence belongs to the neurotoxin 01 (U2-agtx) family. In terms of tissue distribution, expressed by the venom gland.

The protein localises to the secreted. Functionally, insect active toxin causing rapid but reversible paralysis in crickets. No activity shown in mammals. Does not show effect on mammalian voltage-gated calcium channels. In Agelena orientalis (Funnel-web spider), this protein is U2-agatoxin-Ao1u.